Here is a 75-residue protein sequence, read N- to C-terminus: UPF0512 protein D (75 aa).

The disordered stretch occupies residues Met-1–Ser-20.

Belongs to the UPF0512 family.

The polypeptide is UPF0512 protein D (Dictyostelium discoideum (Social amoeba)).